We begin with the raw amino-acid sequence, 131 residues long: Phosphoribosyl-AMP cyclohydrolase (131 aa).

Mg(2+) is bound at residue aspartate 90. Cysteine 91 serves as a coordination point for Zn(2+). Mg(2+) contacts are provided by aspartate 92 and aspartate 94. 2 residues coordinate Zn(2+): cysteine 107 and cysteine 114.

It belongs to the PRA-CH family. Homodimer. Mg(2+) is required as a cofactor. It depends on Zn(2+) as a cofactor.

The protein localises to the cytoplasm. It catalyses the reaction 1-(5-phospho-beta-D-ribosyl)-5'-AMP + H2O = 1-(5-phospho-beta-D-ribosyl)-5-[(5-phospho-beta-D-ribosylamino)methylideneamino]imidazole-4-carboxamide. It participates in amino-acid biosynthesis; L-histidine biosynthesis; L-histidine from 5-phospho-alpha-D-ribose 1-diphosphate: step 3/9. Functionally, catalyzes the hydrolysis of the adenine ring of phosphoribosyl-AMP. The sequence is that of Phosphoribosyl-AMP cyclohydrolase from Hyphomonas neptunium (strain ATCC 15444).